We begin with the raw amino-acid sequence, 614 residues long: Dihydroxy-acid dehydratase (614 aa).

A Mg(2+)-binding site is contributed by Asp81. Cys122 is a binding site for [2Fe-2S] cluster. Mg(2+) contacts are provided by Asp123 and Lys124. Position 124 is an N6-carboxylysine (Lys124). Cys193 is a [2Fe-2S] cluster binding site. Residue Glu489 participates in Mg(2+) binding. Residue Ser515 is the Proton acceptor of the active site.

The protein belongs to the IlvD/Edd family. In terms of assembly, homodimer. It depends on [2Fe-2S] cluster as a cofactor. Mg(2+) is required as a cofactor.

The catalysed reaction is (2R)-2,3-dihydroxy-3-methylbutanoate = 3-methyl-2-oxobutanoate + H2O. The enzyme catalyses (2R,3R)-2,3-dihydroxy-3-methylpentanoate = (S)-3-methyl-2-oxopentanoate + H2O. It functions in the pathway amino-acid biosynthesis; L-isoleucine biosynthesis; L-isoleucine from 2-oxobutanoate: step 3/4. It participates in amino-acid biosynthesis; L-valine biosynthesis; L-valine from pyruvate: step 3/4. Functionally, functions in the biosynthesis of branched-chain amino acids. Catalyzes the dehydration of (2R,3R)-2,3-dihydroxy-3-methylpentanoate (2,3-dihydroxy-3-methylvalerate) into 2-oxo-3-methylpentanoate (2-oxo-3-methylvalerate) and of (2R)-2,3-dihydroxy-3-methylbutanoate (2,3-dihydroxyisovalerate) into 2-oxo-3-methylbutanoate (2-oxoisovalerate), the penultimate precursor to L-isoleucine and L-valine, respectively. The protein is Dihydroxy-acid dehydratase of Marinomonas sp. (strain MWYL1).